A 376-amino-acid chain; its full sequence is Putative F-box protein At1g53370 (376 aa).

The region spanning 22–71 is the F-box domain; sequence RNYIDSIPVDLLIDILSRFPPKSIARFYCVSKLWESILRGPDFTELYLTK.

This is Putative F-box protein At1g53370 from Arabidopsis thaliana (Mouse-ear cress).